Reading from the N-terminus, the 559-residue chain is Membrane protein insertase YidC (559 aa).

The chain crosses the membrane as a helical span at residues 6–26 (TVLWMIFSFSLLLLWNNWQIH). Residues 34–80 (GGPSPEQNAPATANNQAATNPASNTPAVPNAPAATSAPSSVPGSTAP) form a disordered region. The span at 42–80 (APATANNQAATNPASNTPAVPNAPAATSAPSSVPGSTAP) shows a compositional bias: low complexity. A run of 4 helical transmembrane segments spans residues 367–387 (LLGN…AVFY), 441–461 (LPMV…LASV), 480–500 (PYFI…KLNP), and 510–530 (VMMV…AGLV).

Belongs to the OXA1/ALB3/YidC family. Type 1 subfamily. Interacts with the Sec translocase complex via SecD. Specifically interacts with transmembrane segments of nascent integral membrane proteins during membrane integration.

Its subcellular location is the cell inner membrane. Functionally, required for the insertion and/or proper folding and/or complex formation of integral membrane proteins into the membrane. Involved in integration of membrane proteins that insert both dependently and independently of the Sec translocase complex, as well as at least some lipoproteins. Aids folding of multispanning membrane proteins. The sequence is that of Membrane protein insertase YidC from Bordetella avium (strain 197N).